The following is a 394-amino-acid chain: Phosphopentomutase (394 aa).

Mn(2+)-binding residues include D13, D286, H291, D327, H328, and H339.

Belongs to the phosphopentomutase family. Mn(2+) is required as a cofactor.

The protein resides in the cytoplasm. The enzyme catalyses 2-deoxy-alpha-D-ribose 1-phosphate = 2-deoxy-D-ribose 5-phosphate. It catalyses the reaction alpha-D-ribose 1-phosphate = D-ribose 5-phosphate. Its pathway is carbohydrate degradation; 2-deoxy-D-ribose 1-phosphate degradation; D-glyceraldehyde 3-phosphate and acetaldehyde from 2-deoxy-alpha-D-ribose 1-phosphate: step 1/2. In terms of biological role, isomerase that catalyzes the conversion of deoxy-ribose 1-phosphate (dRib-1-P) and ribose 1-phosphate (Rib-1-P) to deoxy-ribose 5-phosphate (dRib-5-P) and ribose 5-phosphate (Rib-5-P), respectively. This Bacillus anthracis (strain A0248) protein is Phosphopentomutase.